The chain runs to 37 residues: Large ribosomal subunit protein bL36 (37 aa).

The protein belongs to the bacterial ribosomal protein bL36 family.

In Methylibium petroleiphilum (strain ATCC BAA-1232 / LMG 22953 / PM1), this protein is Large ribosomal subunit protein bL36.